The sequence spans 375 residues: Trans-enoyl reductase iccB (375 aa).

48-51 (VDAK) is a binding site for NADP(+). A substrate-binding site is contributed by 143–150 (AAVATVGL). NADP(+) contacts are provided by residues 204-207 (SSAS), Tyr222, and 269-270 (LD). 289–293 (TYSQF) contacts substrate. Residue 358 to 359 (IK) participates in NADP(+) binding.

The protein belongs to the zinc-containing alcohol dehydrogenase family. Monomer.

The catalysed reaction is N-[(4E,6E,10S,12Z,14E)-6,10-dimethyl-3-oxohexadeca-4,6,12,14-tetraenoyl]-L-tyrosyl-[ACP] = (3E,5S)-3-[(2E,4E,8S,10E,12Z)-1-hydroxy-4,8-dimethyltetradeca-2,4,10,12-tetraen-1-ylidene]-5-[(4-hydroxyphenyl)methyl]pyrrolidine-2,4-dione + holo-[ACP] + H(+). It participates in mycotoxin biosynthesis. Its function is as follows. Trans-enoyl reductase; part of the gene cluster that mediates the biosynthesis of ilicicolin H, a 4-hydroxy-2-pyridonealkaloid that has potent and broad antifungal activities by inhibiting the mitochondrial respiration chain. IccB collaborates with the hybrid PKS-NRPS synthetase iccA to assemble the backbone of ilicicolin H. The PKS portion of iccA and trans-acting enoyl reductase iccB work together to construct an octaketide, and two methyl groups are introduced by the MT domain of iccA during the chain assembly. The nascent chain is then condensed with tyrosine, catalyzed by the iliA C domain, and the resulting PKS-NRPS hybrid is offloaded by the iliA RED domain to form an advanced tetramic acid intermediate. The biosynthesis of ilicicolin H starts with formation of the tetramic acid by the hybrid PKS-NRPS synthetase iccA with the partnering trans-enoyl reductase iccB since iccA lacks a designated enoylreductase (ER) domain. The cytochrome P450 monooxygenase iccC then catalyzes the ring expansion of the tetramate to the acyclic 2-pyridone. The pericyclase iccD further converts the acyclic 2-pyridone into 8-epi-ilicicolin H. Finally, the epimerase iccE converts 8-epi-ilicicolin H into ilicicolin H via epimerization. IccA to iccE are sufficient for ilicicolin H biosynthesis and the roles of the remaining enzymes, iccF, iccG and iccH within the pathway have still to be determined. This chain is Trans-enoyl reductase iccB, found in Talaromyces variabilis (Penicillium variabile).